A 1353-amino-acid polypeptide reads, in one-letter code: Inhibitor of Bruton tyrosine kinase (1353 aa).

ANK repeat units follow at residues phenylalanine 51–valine 80 and serine 85–isoleucine 114. 3 RCC1 repeats span residues proline 141 to glutamine 194, lysine 195 to glutamate 246, and glycine 248 to arginine 301. BTB domains follow at residues histidine 564–threonine 644 and cysteine 768–lysine 836. Residues serine 806–isoleucine 835 form an ANK 3 repeat. A disordered region spans residues histidine 970–isoleucine 1001. Over residues lysine 976–lysine 988 the composition is skewed to basic residues. Serine 990 carries the phosphoserine modification. The segment covering serine 992 to isoleucine 1001 has biased composition (polar residues). 10 positions are modified to phosphoserine: serine 1004, serine 1030, serine 1033, serine 1039, serine 1045, serine 1054, serine 1083, serine 1111, serine 1113, and serine 1116. Positions lysine 1134–glutamine 1155 are disordered.

As to quaternary structure, interacts with the PH domain of BTK. Isoform 2 does not interact with BTK. In terms of tissue distribution, expressed in DeFew, HEK293T, HeLa and in Jurkat, MC3 and NB4 lymphoid cells (at protein level). Isoform 1 is the predominant isoform expressed in all examined tissues and cell lines. Highly expressed in hemopoietic tissues (fetal liver, spleen, lymph node, thymus, peripheral blood leukocytes and bone marrow). Weakly or not expressed in other tissues.

It localises to the cytoplasm. Its subcellular location is the membrane. The protein localises to the nucleus. In terms of biological role, acts as an inhibitor of BTK tyrosine kinase activity, thereby playing a role in B-cell development. Down-regulates BTK kinase activity, leading to interference with BTK-mediated calcium mobilization and NF-kappa-B-driven transcription. In Homo sapiens (Human), this protein is Inhibitor of Bruton tyrosine kinase (IBTK).